The primary structure comprises 334 residues: Glucokinase-like protein PD_0680 (334 aa).

18–23 (ADVGGT) lines the ATP pocket.

The protein belongs to the bacterial glucokinase family.

This Xylella fastidiosa (strain Temecula1 / ATCC 700964) protein is Glucokinase-like protein PD_0680.